A 113-amino-acid chain; its full sequence is Ribosome-binding factor A (113 aa).

It belongs to the RbfA family. As to quaternary structure, monomer. Binds 30S ribosomal subunits, but not 50S ribosomal subunits or 70S ribosomes.

It is found in the cytoplasm. In terms of biological role, one of several proteins that assist in the late maturation steps of the functional core of the 30S ribosomal subunit. Associates with free 30S ribosomal subunits (but not with 30S subunits that are part of 70S ribosomes or polysomes). Required for efficient processing of 16S rRNA. May interact with the 5'-terminal helix region of 16S rRNA. This is Ribosome-binding factor A from Oceanobacillus iheyensis (strain DSM 14371 / CIP 107618 / JCM 11309 / KCTC 3954 / HTE831).